The sequence spans 396 residues: Elongation factor Tu 1 (396 aa).

Positions 10–206 constitute a tr-type G domain; the sequence is KPHVNVGTIG…TLDTYIPEPE (197 aa). Residues 19–26 are G1; it reads GHVDHGKT. 19–26 serves as a coordination point for GTP; that stretch reads GHVDHGKT. Residue Thr26 participates in Mg(2+) binding. A G2 region spans residues 60-64; the sequence is GITIN. A G3 region spans residues 81-84; that stretch reads DCPG. GTP is bound by residues 81 to 85 and 136 to 139; these read DCPGH and NKCD. Residues 136-139 are G4; the sequence is NKCD. The G5 stretch occupies residues 174 to 176; the sequence is SAL.

It belongs to the TRAFAC class translation factor GTPase superfamily. Classic translation factor GTPase family. EF-Tu/EF-1A subfamily. Monomer.

The protein localises to the cytoplasm. The enzyme catalyses GTP + H2O = GDP + phosphate + H(+). Its function is as follows. GTP hydrolase that promotes the GTP-dependent binding of aminoacyl-tRNA to the A-site of ribosomes during protein biosynthesis. In Psychrobacter sp. (strain PRwf-1), this protein is Elongation factor Tu 1.